Here is a 203-residue protein sequence, read N- to C-terminus: ATP-dependent Clp protease proteolytic subunit 1 (203 aa).

Residue Ser102 is the Nucleophile of the active site. Residue His127 is part of the active site.

The protein belongs to the peptidase S14 family. In terms of assembly, fourteen ClpP subunits assemble into 2 heptameric rings which stack back to back to give a disk-like structure with a central cavity, resembling the structure of eukaryotic proteasomes.

The protein resides in the cytoplasm. The enzyme catalyses Hydrolysis of proteins to small peptides in the presence of ATP and magnesium. alpha-casein is the usual test substrate. In the absence of ATP, only oligopeptides shorter than five residues are hydrolyzed (such as succinyl-Leu-Tyr-|-NHMec, and Leu-Tyr-Leu-|-Tyr-Trp, in which cleavage of the -Tyr-|-Leu- and -Tyr-|-Trp bonds also occurs).. Its function is as follows. Cleaves peptides in various proteins in a process that requires ATP hydrolysis. Has a chymotrypsin-like activity. Plays a major role in the degradation of misfolded proteins. The sequence is that of ATP-dependent Clp protease proteolytic subunit 1 from Rhizobium johnstonii (strain DSM 114642 / LMG 32736 / 3841) (Rhizobium leguminosarum bv. viciae).